A 365-amino-acid polypeptide reads, in one-letter code: Chorismate synthase (365 aa).

An NADP(+)-binding site is contributed by R46. FMN is bound by residues R123 to S125, N241 to G242, G281, K296 to S300, and R322.

The protein belongs to the chorismate synthase family. In terms of assembly, homotetramer. FMNH2 serves as cofactor.

It catalyses the reaction 5-O-(1-carboxyvinyl)-3-phosphoshikimate = chorismate + phosphate. It participates in metabolic intermediate biosynthesis; chorismate biosynthesis; chorismate from D-erythrose 4-phosphate and phosphoenolpyruvate: step 7/7. Its function is as follows. Catalyzes the anti-1,4-elimination of the C-3 phosphate and the C-6 proR hydrogen from 5-enolpyruvylshikimate-3-phosphate (EPSP) to yield chorismate, which is the branch point compound that serves as the starting substrate for the three terminal pathways of aromatic amino acid biosynthesis. This reaction introduces a second double bond into the aromatic ring system. The protein is Chorismate synthase of Helicobacter pylori (strain J99 / ATCC 700824) (Campylobacter pylori J99).